The sequence spans 95 residues: Acylphosphatase (95 aa).

In terms of domain architecture, Acylphosphatase-like spans 10–95 (CIHVTVSGKV…VEDYSDFRVR (86 aa)). Residues Arg-25 and Asn-43 contribute to the active site.

This sequence belongs to the acylphosphatase family.

It catalyses the reaction an acyl phosphate + H2O = a carboxylate + phosphate + H(+). The polypeptide is Acylphosphatase (acyP) (Coxiella burnetii (strain RSA 493 / Nine Mile phase I)).